Consider the following 450-residue polypeptide: MAPLVTVVSSPRARLFACFLRLGTQQAGPLQLHTGACCTAKNHYEVLVLGGGAGGITMATRMKRRVGAENVAIVEPSERHFYQPIWTLVGAGAKELSLSVRSTLSVIPSGVQWIQDRVAELNPDENCIRTDSGKEISYRYLIIALGIQLDYEKIKGLPEGFAYPKIGSNYSVKTVEKTWKALQGFKEGNALFTFPNTPVKCAGAPQKIMYLSEAYFRKTGKRPKANIIFNTALGTIFGVKKYADALQEIIRERDVSVNYKHNLIEVRPDKQEAVFEILDKPGETHVIPYEMLHVTPPMSAPDVLKRSPVADSAGWVDVDKETLQHKKYPNVFGIGDCTNLPTSKTAAAVAAQSGILDRTMCLIMKNQRPIKKYDGYTSCPLVTGYNRVILAEFDYTAQPLETFPFDQSKERITMYLMKADMMPFLYWNMMLRGYWGGPAFLRKLFHLGMN.

Residues 53 to 54 (AG), Glu-75, Gln-83, and Val-118 each bind FAD. N6-acetyllysine is present on residues Lys-134 and Lys-173. Cys-201 (cysteine persulfide intermediate) is an active-site residue. A disulfide bond links Cys-201 and Cys-379. Asp-336 contributes to the FAD binding site. Ser-343 bears the Phosphoserine mark. 344 to 347 (KTAA) provides a ligand contact to FAD. Cys-379 acts as the Cysteine persulfide intermediate in catalysis.

Belongs to the SQRD family. The cofactor is FAD.

The protein localises to the mitochondrion. It carries out the reaction ubiquinone-10 + hydrogen sulfide + sulfite + 2 H(+) = ubiquinol-10 + thiosulfate. It catalyses the reaction a quinone + hydrogen sulfide + glutathione + H(+) = S-sulfanylglutathione + a quinol. The enzyme catalyses ubiquinone-10 + hydrogen sulfide + glutathione + H(+) = S-sulfanylglutathione + ubiquinol-10. In terms of biological role, catalyzes the oxidation of hydrogen sulfide with the help of a quinone, such as ubiquinone-10, giving rise to thiosulfate and ultimately to sulfane (molecular sulfur) atoms. Requires an additional electron acceptor; can use sulfite, sulfide or cyanide (in vitro). It is believed the in vivo electron acceptor is glutathione. In Mus musculus (Mouse), this protein is Sulfide:quinone oxidoreductase, mitochondrial.